Reading from the N-terminus, the 187-residue chain is Epididymal-specific lipocalin-10 (187 aa).

The N-terminal stretch at 1–19 is a signal peptide; sequence MRQGLLVLALVLVLVLVLA. A disulfide bond links Cys-90 and Cys-163. A glycan (N-linked (GlcNAc...) asparagine) is linked at Asn-149. Position 170 is an N6-acetyllysine (Lys-170).

Belongs to the calycin superfamily. Lipocalin family.

The protein resides in the secreted. Its function is as follows. May play a role in male fertility. May act as a retinoid carrier protein within the epididymis. The protein is Epididymal-specific lipocalin-10 (LCN10) of Homo sapiens (Human).